Here is a 328-residue protein sequence, read N- to C-terminus: Cytochrome c biogenesis protein CcsA (328 aa).

8 consecutive transmembrane segments (helical) span residues 13 to 33 (ISFS…LVNL), 46 to 66 (GIII…IYSG), 73 to 93 (LYES…VSYF), 101 to 121 (LNAI…SGLL), 146 to 166 (MILG…LLVI), 234 to 254 (IISL…VWAN), 263 to 283 (WDPK…YLHI), and 295 to 315 (AIVA…VNLL).

Belongs to the CcmF/CycK/Ccl1/NrfE/CcsA family. In terms of assembly, may interact with Ccs1.

The protein resides in the plastid. Its subcellular location is the chloroplast thylakoid membrane. Its function is as follows. Required during biogenesis of c-type cytochromes (cytochrome c6 and cytochrome f) at the step of heme attachment. The sequence is that of Cytochrome c biogenesis protein CcsA from Capsella bursa-pastoris (Shepherd's purse).